The chain runs to 118 residues: Large ribosomal subunit protein uL22c (118 aa).

Belongs to the universal ribosomal protein uL22 family. As to quaternary structure, part of the 50S ribosomal subunit.

Its subcellular location is the plastid. It localises to the chloroplast. Functionally, this protein binds specifically to 23S rRNA. In terms of biological role, the globular domain of the protein is located near the polypeptide exit tunnel on the outside of the subunit, while an extended beta-hairpin is found that lines the wall of the exit tunnel in the center of the 70S ribosome. The protein is Large ribosomal subunit protein uL22c (rpl22) of Rhodomonas salina (Cryptomonas salina).